A 330-amino-acid chain; its full sequence is Endochitinase Ziz m 1.0101 (330 aa).

An N-terminal signal peptide occupies residues 1 to 24; it reads MVPQAKLVVASLILTSALIQTSEA. The region spanning 26–330 is the GH18 domain; the sequence is GGIATYWGQY…LRTKFMYQNA (305 aa). 3 cysteine pairs are disulfide-bonded: cysteine 47-cysteine 90, cysteine 77-cysteine 80, and cysteine 187-cysteine 219. The binds to IgE in 70% of the 10 patients tested allergic to Indian jujube and latex stretch occupies residues 72-86; it reads NISGHCSDCTFLGEE. The interval 292–301 is binds to IgE in 100% of the 10 patients tested allergic to Indian jujube and latex; sufficient for prediction of the presence of allergic reactions in these patients; the sequence is VWNRYYDLKT. Binds to IgE in 70% of the 10 patients tested allergic to Indian jujube and latex stretches follow at residues 300-311 and 309-320; these read KTNYSSSIILEY and LEYVNSGTKYLP.

It belongs to the glycosyl hydrolase 18 family. Chitinase class II subfamily.

The protein resides in the secreted. It catalyses the reaction Random endo-hydrolysis of N-acetyl-beta-D-glucosaminide (1-&gt;4)-beta-linkages in chitin and chitodextrins.. In terms of biological role, defense against chitin containing fungal pathogens. The polypeptide is Endochitinase Ziz m 1.0101 (Ziziphus mauritiana (Indian jujube)).